Reading from the N-terminus, the 160-residue chain is Protein BOLA1, chloroplastic (160 aa).

The transit peptide at 1 to 50 (MFSSSIRLIVSGFHRTQPLKSPVNSPSVFISVPKFFNSESKSTGTGSRSV) directs the protein to the chloroplast. The span at 39-61 (ESKSTGTGSRSVAMSSVEKTGSD) shows a compositional bias: polar residues. A disordered region spans residues 39 to 66 (ESKSTGTGSRSVAMSSVEKTGSDSGAIE).

Belongs to the bolA/yrbA family. Interacts in vitro with GRXS14, GRXS15, GRXS16 and GRXS17, but not with GRXC5. Interacts in vivo only with GRXS14 and GRXS16.

The protein resides in the plastid. It is found in the chloroplast. May act either alone or in interaction with glutaredoxin as a redox-regulated transcriptional regulator, or as a factor regulating Fe-S cluster biogenesis. The glutaredoxin-BOLA1 heterodimers bind a labile, oxygen sensitive iron-sulfur cluster. This is Protein BOLA1, chloroplastic from Arabidopsis thaliana (Mouse-ear cress).